The chain runs to 233 residues: 5'-methylthioadenosine/S-adenosylhomocysteine nucleosidase (233 aa).

The active-site Proton acceptor is Glu12. Substrate contacts are provided by residues Gly78, Ile156, and 177-178 (ME). The active-site Proton donor is the Asp201.

It belongs to the PNP/UDP phosphorylase family. MtnN subfamily.

It carries out the reaction S-adenosyl-L-homocysteine + H2O = S-(5-deoxy-D-ribos-5-yl)-L-homocysteine + adenine. The enzyme catalyses S-methyl-5'-thioadenosine + H2O = 5-(methylsulfanyl)-D-ribose + adenine. It catalyses the reaction 5'-deoxyadenosine + H2O = 5-deoxy-D-ribose + adenine. Its pathway is amino-acid biosynthesis; L-methionine biosynthesis via salvage pathway; S-methyl-5-thio-alpha-D-ribose 1-phosphate from S-methyl-5'-thioadenosine (hydrolase route): step 1/2. Functionally, catalyzes the irreversible cleavage of the glycosidic bond in both 5'-methylthioadenosine (MTA) and S-adenosylhomocysteine (SAH/AdoHcy) to adenine and the corresponding thioribose, 5'-methylthioribose and S-ribosylhomocysteine, respectively. Also cleaves 5'-deoxyadenosine, a toxic by-product of radical S-adenosylmethionine (SAM) enzymes, into 5-deoxyribose and adenine. This chain is 5'-methylthioadenosine/S-adenosylhomocysteine nucleosidase, found in Listeria monocytogenes serovar 1/2a (strain ATCC BAA-679 / EGD-e).